The following is a 492-amino-acid chain: MSTPAKELCRLGLREAGAGVAAKAISSTELVEASLARIQATDGKLGAFLAVCADRARAAAKAADARAARGERRSELDGVPVAVKDLFVTKGVPTTAGSRILEGYLPPYDATVVERLEAAGAVIVGKLNMDEFAMGSSNENSAYKPCHNPWDLSRTPGGSSGGSAASVAAGQVHASLGTDTGGSIREPAAFCGVVGVKPTYGRVSRYGVVAFASSLDQVGPLAREVGDAALVLRTIAGHDPRDMTSSTRPVDDYLGPLEEGARGLRVGVPREWLSGGLDAGVEAAIRAALDTYRRLGATLVDVSLPHSKYGIGAYYLIAPAEASSNLARYDGVRYGLRAEGAKGLKEMYAESREQGLGAEPKRRIMLGTYALSSGYYDAYYLRAQKVRTLIRRDFDEAFRGCDVIAGPVTPSVAFALGERTGDPLQMYLADIFTITCNLAALPGLSVPCGLEAASGLPVGLQLVGRPFDEATLFRAARALERELGPLPAPPEP.

Catalysis depends on charge relay system residues K84 and S159. The Acyl-ester intermediate role is filled by S183.

Belongs to the amidase family. GatA subfamily. As to quaternary structure, heterotrimer of A, B and C subunits.

The enzyme catalyses L-glutamyl-tRNA(Gln) + L-glutamine + ATP + H2O = L-glutaminyl-tRNA(Gln) + L-glutamate + ADP + phosphate + H(+). Allows the formation of correctly charged Gln-tRNA(Gln) through the transamidation of misacylated Glu-tRNA(Gln) in organisms which lack glutaminyl-tRNA synthetase. The reaction takes place in the presence of glutamine and ATP through an activated gamma-phospho-Glu-tRNA(Gln). The polypeptide is Glutamyl-tRNA(Gln) amidotransferase subunit A (Anaeromyxobacter dehalogenans (strain 2CP-C)).